We begin with the raw amino-acid sequence, 274 residues long: Undecaprenyl-diphosphatase 1 (274 aa).

7 consecutive transmembrane segments (helical) span residues 8–28 (WLLI…PIPV), 45–65 (IEGL…VIAI), 92–112 (FRIS…ALLF), 120–140 (LKQL…LWLI), 195–215 (FSFF…ISDI), 230–250 (IAFI…MNIM), and 253–273 (GKLI…LSLL).

The protein belongs to the UppP family.

The protein localises to the cell membrane. It catalyses the reaction di-trans,octa-cis-undecaprenyl diphosphate + H2O = di-trans,octa-cis-undecaprenyl phosphate + phosphate + H(+). Catalyzes the dephosphorylation of undecaprenyl diphosphate (UPP). Confers resistance to bacitracin. This Halalkalibacterium halodurans (strain ATCC BAA-125 / DSM 18197 / FERM 7344 / JCM 9153 / C-125) (Bacillus halodurans) protein is Undecaprenyl-diphosphatase 1.